Consider the following 392-residue polypeptide: MAQTEIKSYTLNFGPQHPAAHGVLRLVLELSGEVIERADPHIGLLHRGTEKLIEYKTYLQALPYFDRLDYACPMNQEHAYVLAVEKLLGITVPPRAQYLRTLFNEVTRLINHIMNTTSMALDIGAMTPLLYGFEEREHLLEFSERASGARMHAAWFRPGGVARDVPPDLLEDILKFCDSFPKYLDDVEHLLDENRIFKQRTVDIGKVTAQQALDWGFTGPVLRGCGVPWDLRKSQPYDAYAAMDFDIPTGANGDCYDRYLVRMAEQRQSIRIMRQCIEKMPDGPVKAVDHKVTPPSRGEMKSSMEALIHHFKLFTEGFKVPEGETYTAVEAATGEFGVYLVSDGTNRPYRCKIRSPGYVHLQGLDLMSRGHMLADVVANIGSIDVVFGEIDR.

This sequence belongs to the complex I 49 kDa subunit family. NDH-1 is composed of 14 different subunits. Subunits NuoB, C, D, E, F, and G constitute the peripheral sector of the complex.

It is found in the cell inner membrane. The catalysed reaction is a quinone + NADH + 5 H(+)(in) = a quinol + NAD(+) + 4 H(+)(out). Its function is as follows. NDH-1 shuttles electrons from NADH, via FMN and iron-sulfur (Fe-S) centers, to quinones in the respiratory chain. The immediate electron acceptor for the enzyme in this species is believed to be ubiquinone. Couples the redox reaction to proton translocation (for every two electrons transferred, four hydrogen ions are translocated across the cytoplasmic membrane), and thus conserves the redox energy in a proton gradient. The protein is NADH-quinone oxidoreductase subunit D of Rhodospirillum rubrum (strain ATCC 11170 / ATH 1.1.1 / DSM 467 / LMG 4362 / NCIMB 8255 / S1).